A 123-amino-acid chain; its full sequence is Small ribosomal subunit protein uS12c (123 aa).

A disordered region spans residues 9-31 (RNKRQAAENKTKSPALQRSPQRR).

It belongs to the universal ribosomal protein uS12 family. Part of the 30S ribosomal subunit.

Its subcellular location is the plastid. It localises to the chloroplast. Its function is as follows. With S4 and S5 plays an important role in translational accuracy. Located at the interface of the 30S and 50S subunits. In Spirogyra maxima (Green alga), this protein is Small ribosomal subunit protein uS12c (rps12).